The following is a 396-amino-acid chain: Pre-mycofactocin synthase (396 aa).

One can recognise an FMN hydroxy acid dehydrogenase domain in the interval Met-1–Gly-383. FMN-binding residues include Ser-108, Gln-128, Thr-156, and Lys-254. His-278 functions as the Proton acceptor in the catalytic mechanism. FMN-binding positions include Asp-309–Arg-313 and Gly-332–Arg-333.

It belongs to the FMN-dependent alpha-hydroxy acid dehydrogenase family. The cofactor is FMN.

It catalyses the reaction 3-amino-5-[(4-hydroxyphenyl)methyl]-4,4-dimethyl-2-pyrrolidin-2-one + O2 + H2O = pre-mycofactocin + H2O2 + NH4(+). Its function is as follows. Involved in the biosynthesis of the enzyme cofactor mycofactocin (MFT). Catalyzes the oxidative deamination of AHDP (3-amino-5-[(4-hydroxyphenyl)methyl]-4,4-dimethyl-2-pyrrolidin-2-one), forming an alpha-keto amide moiety on the resulting molecule, which is called pre-mycofactocin (PMFT). This reaction occurs via a 5-[(4-hydroxyphenyl)methyl]-3-imino-4,4-dimethylpyrrolidin-2-one intermediate, which converts to PMFT. The alpha-keto amide moiety is the redox-active center for the redox activity of mycofactocin. The polypeptide is Pre-mycofactocin synthase (mftD) (Mycobacterium tuberculosis (strain CDC 1551 / Oshkosh)).